A 447-amino-acid polypeptide reads, in one-letter code: Probable glycine dehydrogenase (decarboxylating) subunit 1 (447 aa).

The protein belongs to the GcvP family. N-terminal subunit subfamily. As to quaternary structure, the glycine cleavage system is composed of four proteins: P, T, L and H. In this organism, the P 'protein' is a heterodimer of two subunits.

The catalysed reaction is N(6)-[(R)-lipoyl]-L-lysyl-[glycine-cleavage complex H protein] + glycine + H(+) = N(6)-[(R)-S(8)-aminomethyldihydrolipoyl]-L-lysyl-[glycine-cleavage complex H protein] + CO2. Its function is as follows. The glycine cleavage system catalyzes the degradation of glycine. The P protein binds the alpha-amino group of glycine through its pyridoxal phosphate cofactor; CO(2) is released and the remaining methylamine moiety is then transferred to the lipoamide cofactor of the H protein. This Bacillus cereus (strain G9842) protein is Probable glycine dehydrogenase (decarboxylating) subunit 1.